Reading from the N-terminus, the 319-residue chain is CD2 antigen cytoplasmic tail-binding protein 2 homolog (319 aa).

2 disordered regions span residues 1–57 (MASK…EDDV) and 105–124 (NAFD…KNEP). Positions 12–24 (KVKEESFKKHTLD) are enriched in basic and acidic residues. 2 positions are modified to phosphoserine: serine 25 and serine 30. Over residues 25–47 (SDEEDSDDYEREYLNDSDIEGGE) the composition is skewed to acidic residues. Position 37 is a phosphotyrosine (tyrosine 37). Phosphoserine is present on serine 41. The span at 109-124 (PAKDEENSSDEEKNEP) shows a compositional bias: basic and acidic residues. A GYF domain is found at 260-316 (EVTWEFKWSQDETDIQGPFSTEKMLKWSQENYFKNGVYVRKCGENTNFYTSNRIDFD).

Its subcellular location is the nucleus. Required for embryonic epithelial tissue repair, but not for the assembly of the actomyosin cable at the wound edge. Probably acts downstream of rl in the regulation of Ddc and msn transcription to promote wound healing. This is CD2 antigen cytoplasmic tail-binding protein 2 homolog (holn1) from Drosophila melanogaster (Fruit fly).